The primary structure comprises 488 residues: Histamine H1 receptor (488 aa).

Residues 1–29 (MSLPNTSSASEDKMCEGNRTAMASPQLLP) are Extracellular-facing. Asn-5 and Asn-18 each carry an N-linked (GlcNAc...) asparagine glycan. The chain crosses the membrane as a helical span at residues 30–50 (LVVVLSSISLVTVGLNLLVLY). Over 51–64 (AVRSERKLHTVGNL) the chain is Cytoplasmic. A helical transmembrane segment spans residues 65–89 (YIVSLSVADLIVGAVVMPMNILYLI). Topologically, residues 90–97 (MTKWSLGR) are extracellular. Residues 98–123 (PLCLFWLSMDYVASTASIFSVFILCI) traverse the membrane as a helical segment. Cys-100 and Cys-180 form a disulfide bridge. The histamine site is built by Asp-107 and Thr-112. The tract at residues 107-112 (DYVAST) is important for agonist binding. The Cytoplasmic portion of the chain corresponds to 124-144 (DRYRSVQQPLRYLRYRTKTRA). Residues Thr-140 and Thr-142 each carry the phosphothreonine modification. The chain crosses the membrane as a helical span at residues 145-164 (SATILGAWFLSFLWVIPILG). Over 165-188 (WHHFTPLAPELREDKCETDFYNVT) the chain is Extracellular. A helical transmembrane segment spans residues 189-211 (WFKIMTAIINFYLPTLLMLWFYV). A histamine-binding site is contributed by Asn-198. Topologically, residues 212–417 (KIYKAVRRHC…LNRERKAAKQ (206 aa)) are cytoplasmic. Ser-230 bears the Phosphoserine mark. The tract at residues 245 to 337 (KEGAKKPGKE…SQPKMDEQSL (93 aa)) is disordered. The segment covering 322–337 (ANDQTLSQPKMDEQSL) has biased composition (polar residues). Residues Ser-344, Ser-347, Ser-381, Ser-383, Ser-397, and Ser-399 each carry the phosphoserine modification. A helical membrane pass occupies residues 418 to 441 (LGCIMAAFILCWIPYFIFFMVIAF). Residues 425–429 (FILCW) are important for agonist binding. Tyr-432 is a binding site for histamine. The cysteines at positions 442 and 445 are disulfide-linked. The Extracellular segment spans residues 442–447 (CNSCCS). The chain crosses the membrane as a helical span at residues 448 to 470 (EPVHMFTIWLGYINSTLNPLIYP). Residues 471–488 (LCNENFKKTFKKILHIRS) lie on the Cytoplasmic side of the membrane.

The protein belongs to the G-protein coupled receptor 1 family. Phosphorylation at sites in the second and third cytoplasmic loops independently contribute to agonist-induced receptor down-regulation.

The protein localises to the cell membrane. In terms of biological role, G-protein-coupled receptor for histamine, a biogenic amine that functions as an immune modulator and a neurotransmitter. Through the H1 receptor, histamine mediates the contraction of smooth muscles and increases capillary permeability due to contraction of terminal venules. Also mediates neurotransmission in the central nervous system and thereby regulates circadian rhythms, emotional and locomotor activities as well as cognitive functions. The protein is Histamine H1 receptor of Mus musculus (Mouse).